The primary structure comprises 492 residues: 3-octaprenyl-4-hydroxybenzoate carboxy-lyase (492 aa).

Asn177 contacts Mn(2+). Prenylated FMN is bound by residues 180–182 (IYR), 194–196 (RWL), and 199–200 (RG). Glu243 lines the Mn(2+) pocket. Asp292 acts as the Proton donor in catalysis.

Belongs to the UbiD family. In terms of assembly, homohexamer. The cofactor is prenylated FMN. It depends on Mn(2+) as a cofactor.

The protein resides in the cell membrane. It carries out the reaction a 4-hydroxy-3-(all-trans-polyprenyl)benzoate + H(+) = a 2-(all-trans-polyprenyl)phenol + CO2. It functions in the pathway cofactor biosynthesis; ubiquinone biosynthesis. Its function is as follows. Catalyzes the decarboxylation of 3-octaprenyl-4-hydroxy benzoate to 2-octaprenylphenol, an intermediate step in ubiquinone biosynthesis. This is 3-octaprenyl-4-hydroxybenzoate carboxy-lyase from Neisseria meningitidis serogroup A / serotype 4A (strain DSM 15465 / Z2491).